Reading from the N-terminus, the 373-residue chain is MKPINTFFSSFLLALTLGLPATSQAEVEIPIMDLVDVRGIRENQLVGYGLVVGLAGQGDRNQVKFTSQSITNMLRQFGVQIDDSMDPKLRNVASVSVTASVDPMAGPGQTLDVVVSSIGDAKSLRGGTLLLTPLRGIDGEVYAIAQGSVVVGGLSAEGKSGSKVEVNTPTAGRVPNGATLEREIKTDFNQRDEITLNLRKPSFTTAKNIAREINNTFGPNVAVAINKARVDMRAPKDTQQRVIMMSMLEEMSVVEGRKPARIVFNSRTGTVVIGKNVKVGEAAVSHGNLTVRISESEKVSQPNAFADGETKVVNQTDIDVNEELAQMVIWPPGTELNTIVDAVNSLGATPTDLMSILQALNEAGALNAELVVI.

Positions 1–25 are cleaved as a signal peptide; it reads MKPINTFFSSFLLALTLGLPATSQA.

The protein belongs to the FlgI family. The basal body constitutes a major portion of the flagellar organelle and consists of four rings (L,P,S, and M) mounted on a central rod.

It localises to the periplasm. It is found in the bacterial flagellum basal body. Assembles around the rod to form the L-ring and probably protects the motor/basal body from shearing forces during rotation. The polypeptide is Flagellar P-ring protein 1 (Vibrio parahaemolyticus serotype O3:K6 (strain RIMD 2210633)).